A 566-amino-acid polypeptide reads, in one-letter code: Putative ankyrin repeat protein RF_0987 (566 aa).

3 disordered regions span residues 61 to 118 (KKKN…HENS), 276 to 314 (PPVM…SAEI), and 355 to 392 (VNNN…SEST). Residues 78–92 (NQEEPKLASQEHTEA) show a composition bias toward basic and acidic residues. A compositionally biased stretch (polar residues) spans 101–112 (TGNTALPSVTAS). The span at 296–308 (TPVTTPSKVVPTT) shows a compositional bias: low complexity. Over residues 365-378 (EKSPPVSSSNVTIQ) the composition is skewed to polar residues. ANK repeat units follow at residues 506 to 535 (SGET…KIST) and 539 to 566 (ECQY…KGYQ).

This chain is Putative ankyrin repeat protein RF_0987, found in Rickettsia felis (strain ATCC VR-1525 / URRWXCal2) (Rickettsia azadi).